The following is a 48-amino-acid chain: Large ribosomal subunit protein uL14 (48 aa).

The protein belongs to the universal ribosomal protein uL14 family.

This is Large ribosomal subunit protein uL14 (RPL23) from Onchocerca volvulus.